A 967-amino-acid polypeptide reads, in one-letter code: Leucine-rich repeat receptor-like protein kinase PXC2 (967 aa).

The signal sequence occupies residues 1 to 20 (MFNGAVSLLFLFLAVVSARA). Topologically, residues 21-609 (DPTFNDDVLG…QIRKSVLSIS (589 aa)) are extracellular. LRR repeat units lie at residues 91–114 (LQFL…EFPH), 115–139 (LGSL…FFEQ), 141–164 (GSLR…LSYC), 165–189 (STLT…WFLK), 191–212 (LKSL…LGGL), 214–236 (DLRH…IGRC), 237–260 (SSLK…MKSL), 262–284 (SCSS…IGDI), 285–307 (ATLE…SLGN), 308–332 (LEFL…LSNC), and 334–356 (NLIS…MFTG). N103 and N127 each carry an N-linked (GlcNAc...) asparagine glycan. N171 carries an N-linked (GlcNAc...) asparagine glycan. N219 carries an N-linked (GlcNAc...) asparagine glycan. N296, N315, and N331 each carry an N-linked (GlcNAc...) asparagine glycan. N374 is a glycosylation site (N-linked (GlcNAc...) asparagine). LRR repeat units lie at residues 384 to 408 (LQGL…IWIL), 410 to 432 (SLLQ…IGGL), 433 to 456 (KVAE…IGGA), 457 to 480 (VSLK…ISNC), 482 to 503 (ALNT…SIGS), 504 to 528 (LSNL…IEKL), and 530 to 552 (HLLT…GFFN). Residues N415, N446, N479, N487, N516, N535, N540, N571, and N587 are each glycosylated (N-linked (GlcNAc...) asparagine). A helical membrane pass occupies residues 610-630 (ALIAIGAAAVIAIGVVAVTLL). Topologically, residues 631–967 (NVHARSSVSR…LIQCPSHDLE (337 aa)) are cytoplasmic. Residues 687–959 (LNKDSELGRG…EEVVKILELI (273 aa)) form the Protein kinase domain. ATP is bound by residues 693 to 701 (LGRGGFGVV) and K715.

This sequence belongs to the protein kinase superfamily. Ser/Thr protein kinase family. In terms of tissue distribution, expressed in the vascular strands of cotyledons, the shoot apex, hypocotyls, roots, leaves, stems and flowers.

It localises to the cell membrane. Functionally, leucine-rich repeat receptor-like protein kinase that may play a role in vascular tissues development. This Arabidopsis thaliana (Mouse-ear cress) protein is Leucine-rich repeat receptor-like protein kinase PXC2.